A 734-amino-acid polypeptide reads, in one-letter code: Casein kinase II subunit alpha'-interacting protein (734 aa).

Residues 608–654 (SLLPSTSSSTSSSSTTSSSSSVASASSDSSSSSSSSSSFSISSSSSP) form a disordered region. Over residues 612-654 (STSSSTSSSSTTSSSSSVASASSDSSSSSSSSSSFSISSSSSP) the composition is skewed to low complexity.

In terms of assembly, interacts (via C-terminus) with CSNK2A2. Post-translationally, phosphorylated by CK2 (casein kinase II), specifically by complexes containing catalytic subunit CSNK2A2.

The protein resides in the nucleus. May play a role in chromatin regulation of male germ cells. The chain is Casein kinase II subunit alpha'-interacting protein from Homo sapiens (Human).